The sequence spans 888 residues: Alanine--tRNA ligase (888 aa).

Zn(2+) is bound by residues H564, H568, C676, and H680.

The protein belongs to the class-II aminoacyl-tRNA synthetase family. Zn(2+) is required as a cofactor.

It is found in the cytoplasm. It carries out the reaction tRNA(Ala) + L-alanine + ATP = L-alanyl-tRNA(Ala) + AMP + diphosphate. Functionally, catalyzes the attachment of alanine to tRNA(Ala) in a two-step reaction: alanine is first activated by ATP to form Ala-AMP and then transferred to the acceptor end of tRNA(Ala). Also edits incorrectly charged Ser-tRNA(Ala) and Gly-tRNA(Ala) via its editing domain. This is Alanine--tRNA ligase from Mesorhizobium japonicum (strain LMG 29417 / CECT 9101 / MAFF 303099) (Mesorhizobium loti (strain MAFF 303099)).